The primary structure comprises 172 residues: MAGVNNRVKITNDIELKDRLVAINRVTKVTKGGRTFSFSAIVVVGNEEGIIGWGLGKAGEVTAAIAKGVESAKKNLTRVPVLKGTVPHEQSAKFGGAEVFIKPASHGTGVVAGGAMRAVLESVGVTDVLAKSKGSSNPHNLVKATIMALGEMRDARMIAQNRGISVEKVFRG.

In terms of domain architecture, S5 DRBM spans 16–79 (LKDRLVAINR…ESAKKNLTRV (64 aa)).

The protein belongs to the universal ribosomal protein uS5 family. Part of the 30S ribosomal subunit. Contacts proteins S4 and S8.

In terms of biological role, with S4 and S12 plays an important role in translational accuracy. Functionally, located at the back of the 30S subunit body where it stabilizes the conformation of the head with respect to the body. This chain is Small ribosomal subunit protein uS5, found in Bacteroides fragilis (strain ATCC 25285 / DSM 2151 / CCUG 4856 / JCM 11019 / LMG 10263 / NCTC 9343 / Onslow / VPI 2553 / EN-2).